The sequence spans 279 residues: B3 domain-containing protein Os11g0156000 (279 aa).

Positions Phe38–Arg144 form a DNA-binding region, TF-B3. Disordered stretches follow at residues Ala148 to Ser182 and His203 to Ala228. Over residues Val159–Ala168 the composition is skewed to low complexity. Residues His203–Asp219 are compositionally biased toward basic and acidic residues.

It localises to the nucleus. This chain is B3 domain-containing protein Os11g0156000, found in Oryza sativa subsp. japonica (Rice).